The following is a 347-amino-acid chain: Major capsid protein (347 aa).

It belongs to the baculoviridae major capsid protein family.

It localises to the virion. Most abundant structural protein of the nucleocapsid produced during the infection cycle. The monomers are arranged in stacked rings around the nucleoprotein core. The protein is Major capsid protein (P39) of Autographa californica nuclear polyhedrosis virus (AcMNPV).